The sequence spans 265 residues: Protein Exd1 homolog (265 aa).

One can recognise a 3'-5' exonuclease domain in the interval glutamate 32–alanine 82.

Belongs to the EXD1 family. Homodimer.

In terms of biological role, RNA-binding protein. Inactive exonuclease. The polypeptide is Protein Exd1 homolog (Drosophila melanogaster (Fruit fly)).